Consider the following 165-residue polypeptide: MASEHSFDISAEVDMMEVKNALETAKKEIAARYDFKGLAAEVELNEKEKFITLLSSSDNKIDALKDIVISKLIKRNIPPVAITETKREPASGGNLKATLKLNDTLDSENSKKITKAIKDSKIKVSAQIRGEEIRVTSKSIDDLQECIKLVRGLNLELPISFKNLK.

The protein belongs to the YajQ family.

In terms of biological role, nucleotide-binding protein. The protein is Nucleotide-binding protein Ccon26_01810 of Campylobacter concisus (strain 13826).